The chain runs to 952 residues: Translation initiation factor IF-2 (952 aa).

Disordered stretches follow at residues 74-95 (QRRL…RQLK), 153-204 (AAQA…KEEP), 230-256 (MHSP…EQAD), and 273-319 (DEKG…DVND). Positions 153–168 (AAQADQTDQTDQTDQA) are enriched in low complexity. Basic and acidic residues predominate over residues 232 to 242 (SPFDRSSEAER). A compositionally biased stretch (low complexity) spans 286–303 (PGETNAATPAGTASTAGA). Residues 449–619 (IRPPVITIMG…LAEAEIRELK (171 aa)) enclose the tr-type G domain. Positions 458-465 (GHVDHGKT) are G1. 458 to 465 (GHVDHGKT) serves as a coordination point for GTP. Residues 483–487 (GITQH) form a G2 region. The G3 stretch occupies residues 505–508 (DTPG). Residues 505 to 509 (DTPGH) and 559 to 562 (NKVD) each bind GTP. The G4 stretch occupies residues 559–562 (NKVD). The interval 595–597 (SAK) is G5.

Belongs to the TRAFAC class translation factor GTPase superfamily. Classic translation factor GTPase family. IF-2 subfamily.

It localises to the cytoplasm. In terms of biological role, one of the essential components for the initiation of protein synthesis. Protects formylmethionyl-tRNA from spontaneous hydrolysis and promotes its binding to the 30S ribosomal subunits. Also involved in the hydrolysis of GTP during the formation of the 70S ribosomal complex. In Chlorobium limicola (strain DSM 245 / NBRC 103803 / 6330), this protein is Translation initiation factor IF-2.